The chain runs to 246 residues: 14-3-3 protein beta/alpha (246 aa).

An N-acetylmethionine; in 14-3-3 protein beta/alpha; alternate modification is found at methionine 1. Methionine 1 is subject to N-acetylmethionine. The residue at position 2 (threonine 2) is an N-acetylthreonine; in 14-3-3 protein beta/alpha, N-terminally processed. Phosphothreonine is present on threonine 2. Lysine 5 carries the N6-acetyllysine modification. Lysine 51 carries the N6-acetyllysine; alternate modification. Residue lysine 51 forms a Glycyl lysine isopeptide (Lys-Gly) (interchain with G-Cter in SUMO2); alternate linkage. The residue at position 60 (serine 60) is a Phosphoserine. Lysine 70 is modified (N6-acetyllysine). 3'-nitrotyrosine occurs at positions 84 and 106. Position 117 is an N6-acetyllysine (lysine 117). Residues serine 186 and serine 232 each carry the phosphoserine modification.

This sequence belongs to the 14-3-3 family. As to quaternary structure, homodimer. Interacts with SAMSN1 and PRKCE. Interacts with AKAP13. Interacts with SSH1 and TORC2/CRTC2. Interacts with ABL1; the interaction results in cytoplasmic location of ABL1 and inhibition of cABL-mediated apoptosis. Interacts with ROR2 (dimer); the interaction results in phosphorylation of YWHAB on tyrosine residues. Interacts with GAB2. Interacts with YAP1 (phosphorylated form). Interacts with the phosphorylated (by AKT1) form of SRPK2. Interacts with PKA-phosphorylated AANAT. Interacts with MYO1C. Interacts with SIRT2. Interacts with the 'Thr-369' phosphorylated form of DAPK2. Interacts with PI4KB, TBC1D22A and TBC1D22B. Interacts with the 'Ser-1134' and 'Ser-1161' phosphorylated form of SOS1. Interacts (via phosphorylated form) with YWHAB; this interaction occurs in a protein kinase AKT1-dependent manner. Interacts with SLITRK1. Interacts with SYNPO2 (phosphorylated form); YWHAB competes with ACTN2 for interaction with SYNPO2. Interacts with RIPOR2 (via phosphorylated form) isoform 2; this interaction occurs in a chemokine-dependent manner and does not compete for binding of RIPOR2 with RHOA nor blocks inhibition of RIPOR2-mediated RHOA activity. Interacts with MARK2 and MARK3. Interacts with TESK1; the interaction is dependent on the phosphorylation of TESK1 'Ser-437' and inhibits TESK1 kinase activity. Interacts with MEFV. Interacts with HDAC4. Interacts with ADAM22 (via C-terminus). (Microbial infection) Interacts with herpes simplex virus 1 protein UL46. In terms of assembly, (Microbial infection) Probably interacts with Chlamydia trachomatis protein IncG. In terms of processing, the alpha, brain-specific form differs from the beta form in being phosphorylated. Phosphorylated on Ser-60 by protein kinase C delta type catalytic subunit in a sphingosine-dependent fashion.

It localises to the cytoplasm. The protein localises to the melanosome. Its subcellular location is the vacuole membrane. In terms of biological role, adapter protein implicated in the regulation of a large spectrum of both general and specialized signaling pathways. Binds to a large number of partners, usually by recognition of a phosphoserine or phosphothreonine motif. Binding generally results in the modulation of the activity of the binding partner. Negative regulator of osteogenesis. Blocks the nuclear translocation of the phosphorylated form (by AKT1) of SRPK2 and antagonizes its stimulatory effect on cyclin D1 expression resulting in blockage of neuronal apoptosis elicited by SRPK2. Negative regulator of signaling cascades that mediate activation of MAP kinases via AKAP13. The polypeptide is 14-3-3 protein beta/alpha (YWHAB) (Homo sapiens (Human)).